Consider the following 651-residue polypeptide: Threonine--tRNA ligase (651 aa).

The 61-residue stretch at 1–61 (MPTIQLPDGS…DKDVSLRIIT (61 aa)) folds into the TGS domain. The interval 242–533 (DHRLLAKKMD…LLEESAGKLP (292 aa)) is catalytic. Zn(2+) is bound by residues cysteine 333, histidine 384, and histidine 510. The disordered stretch occupies residues 631–651 (ISQRSRKSPAPSPLFPVGGES).

Belongs to the class-II aminoacyl-tRNA synthetase family. As to quaternary structure, homodimer. The cofactor is Zn(2+).

It is found in the cytoplasm. It carries out the reaction tRNA(Thr) + L-threonine + ATP = L-threonyl-tRNA(Thr) + AMP + diphosphate + H(+). Functionally, catalyzes the attachment of threonine to tRNA(Thr) in a two-step reaction: L-threonine is first activated by ATP to form Thr-AMP and then transferred to the acceptor end of tRNA(Thr). Also edits incorrectly charged L-seryl-tRNA(Thr). The polypeptide is Threonine--tRNA ligase (Coxiella burnetii (strain RSA 493 / Nine Mile phase I)).